The primary structure comprises 287 residues: D-apionate oxidoisomerase (287 aa).

NAD(+) contacts are provided by residues 13-15 (GKM), E36, and D71. Zn(2+) contacts are provided by H116 and E186.

This sequence belongs to the ApnO family. Zn(2+) is required as a cofactor.

It catalyses the reaction D-apionate + NAD(+) = 3-oxoisoapionate + NADH + H(+). It participates in carbohydrate metabolism. In terms of biological role, involved in catabolism of D-apiose. Catalyzes the conversion of D-apionate to 3-oxo-isoapionate. This is D-apionate oxidoisomerase from Blautia hydrogenotrophica (strain DSM 10507 / JCM 14656 / S5a33) (Ruminococcus hydrogenotrophicus).